We begin with the raw amino-acid sequence, 142 residues long: U1 small nuclear ribonucleoprotein C (142 aa).

The segment at 4 to 36 (YYCDYCDTFLTHDSPSVRKTHNGGRKHKDNVRM) adopts a Matrin-type zinc-finger fold.

This sequence belongs to the U1 small nuclear ribonucleoprotein C family. As to quaternary structure, U1 snRNP is composed of the 7 core Sm proteins B/B', D1, D2, D3, E, F and G that assemble in a heptameric protein ring on the Sm site of the small nuclear RNA to form the core snRNP, and at least 3 U1 snRNP-specific proteins U1-70K, U1-A and U1-C. U1-C interacts with U1 snRNA and the 5' splice-site region of the pre-mRNA.

It localises to the nucleus. Functionally, component of the spliceosomal U1 snRNP, which is essential for recognition of the pre-mRNA 5' splice-site and the subsequent assembly of the spliceosome. U1-C is directly involved in initial 5' splice-site recognition for both constitutive and regulated alternative splicing. The interaction with the 5' splice-site seems to precede base-pairing between the pre-mRNA and the U1 snRNA. Stimulates commitment or early (E) complex formation by stabilizing the base pairing of the 5' end of the U1 snRNA and the 5' splice-site region. The polypeptide is U1 small nuclear ribonucleoprotein C (Caenorhabditis elegans).